The chain runs to 637 residues: Chaperone protein DnaK (637 aa).

A Phosphothreonine; by autocatalysis modification is found at Thr198. The tract at residues 600–637 (IAQQQAQAQQAQGADAGAQSKDDDVVDAEFEEVKDDKK) is disordered. Low complexity predominate over residues 601-618 (AQQQAQAQQAQGADAGAQ). Residues 623 to 637 (DVVDAEFEEVKDDKK) show a composition bias toward acidic residues.

It belongs to the heat shock protein 70 family.

Functionally, acts as a chaperone. This Vibrio parahaemolyticus serotype O3:K6 (strain RIMD 2210633) protein is Chaperone protein DnaK.